We begin with the raw amino-acid sequence, 324 residues long: Olfactory receptor 8U3 (324 aa).

Over 1 to 25 the chain is Extracellular; that stretch reads MAEVNIIYVTVFILKGITNRPELQA. The chain crosses the membrane as a helical span at residues 26-46; that stretch reads PCFGVFLVIYLVTVLGNLGLI. Over 47-54 the chain is Cytoplasmic; it reads TLIKIDTR. Residues 55–75 form a helical membrane-spanning segment; it reads LHTPMYYFLSHLAFVDLCYSS. The Extracellular segment spans residues 76–99; that stretch reads AITPKMMVNFVVERNTIPFHACAT. Residues cysteine 97 and cysteine 189 are joined by a disulfide bond. Residues 100-120 form a helical membrane-spanning segment; that stretch reads QLGCFLTFMITECFLLASMAY. The Cytoplasmic portion of the chain corresponds to 121–139; that stretch reads DCYVAICSPLHYSTLMSRR. The helical transmembrane segment at 140–160 threads the bilayer; that stretch reads VCIQLVAVPYIYSFLVALFHT. The Extracellular segment spans residues 161 to 196; that stretch reads VITFRLTYCGPNLINHFYCDDLPFLALSCSDTHMKE. A helical transmembrane segment spans residues 197–217; the sequence is ILIFAFAGFDMISSSSIVLTS. The Cytoplasmic portion of the chain corresponds to 218-237; the sequence is YIFIIAAILRIRSTQGQHKA. Residues 238–258 form a helical membrane-spanning segment; it reads ISTCGSHMVTVTIFYGTLIFM. The Extracellular segment spans residues 259–271; the sequence is YLQPKSNHSLDTD. Asparagine 265 is a glycosylation site (N-linked (GlcNAc...) asparagine). A helical transmembrane segment spans residues 272-292; the sequence is KMASVFYTVVIPMLNPLIYSL. Over 293–324 the chain is Cytoplasmic; the sequence is RNKEVKDASKKALDKGCENLQILTFLKIRKLY.

Belongs to the G-protein coupled receptor 1 family.

It is found in the cell membrane. Functionally, odorant receptor. The sequence is that of Olfactory receptor 8U3 from Homo sapiens (Human).